The primary structure comprises 196 residues: Peptidyl-tRNA hydrolase (196 aa).

TRNA is bound at residue Y17. The active-site Proton acceptor is the H22. Residues F68, N70, and N116 each coordinate tRNA.

The protein belongs to the PTH family. As to quaternary structure, monomer.

It is found in the cytoplasm. The catalysed reaction is an N-acyl-L-alpha-aminoacyl-tRNA + H2O = an N-acyl-L-amino acid + a tRNA + H(+). Its function is as follows. Hydrolyzes ribosome-free peptidyl-tRNAs (with 1 or more amino acids incorporated), which drop off the ribosome during protein synthesis, or as a result of ribosome stalling. In terms of biological role, catalyzes the release of premature peptidyl moieties from peptidyl-tRNA molecules trapped in stalled 50S ribosomal subunits, and thus maintains levels of free tRNAs and 50S ribosomes. This is Peptidyl-tRNA hydrolase from Serratia proteamaculans (strain 568).